A 429-amino-acid chain; its full sequence is Probable proton-coupled zinc antiporter SLC30A4 (429 aa).

The Cytoplasmic portion of the chain corresponds to methionine 1–arginine 113. Residues leucine 114 to isoleucine 134 traverse the membrane as a helical segment. Residues alanine 135–aspartate 143 are Lumenal-facing. The helical transmembrane segment at alanine 144–serine 164 threads the bilayer. Histidine 146 and aspartate 150 together coordinate Zn(2+). Topologically, residues serine 165 to arginine 178 are cytoplasmic. The helical transmembrane segment at leucine 179 to leucine 199 threads the bilayer. The Lumenal segment spans residues tyrosine 200–aspartate 216. Residues isoleucine 217–asparagine 237 form a helical membrane-spanning segment. Residues glutamine 238–alanine 274 lie on the Cytoplasmic side of the membrane. A zinc binding region spans residues glycine 240–histidine 264. A helical transmembrane segment spans residues phenylalanine 275–isoleucine 295. Zn(2+)-binding residues include histidine 277 and aspartate 281. Over arginine 296–tyrosine 310 the chain is Lumenal. A helical membrane pass occupies residues valine 311–isoleucine 331. At leucine 332 to proline 429 the chain is on the cytoplasmic side.

This sequence belongs to the cation diffusion facilitator (CDF) transporter (TC 2.A.4) family. SLC30A subfamily. In terms of assembly, homodimer; dityrosine-linked. Homodimerization could be specific of the human protein and enhances the zinc transport efficiency. Interacts with TMEM163. Homodimerization through dityrosine bonds is stimulated by oxidative stress.

The protein resides in the endosome membrane. The protein localises to the late endosome membrane. Its subcellular location is the lysosome membrane. The catalysed reaction is Zn(2+)(in) + 2 H(+)(out) = Zn(2+)(out) + 2 H(+)(in). In terms of biological role, probable proton-coupled zinc ion antiporter mediating zinc import from cytoplasm potentially into the endocytic compartment. Controls zinc deposition in milk. This Homo sapiens (Human) protein is Probable proton-coupled zinc antiporter SLC30A4.